The sequence spans 247 residues: Small ribosomal subunit protein uS2 (247 aa).

The protein belongs to the universal ribosomal protein uS2 family.

This is Small ribosomal subunit protein uS2 from Pseudomonas savastanoi pv. phaseolicola (strain 1448A / Race 6) (Pseudomonas syringae pv. phaseolicola (strain 1448A / Race 6)).